The chain runs to 53 residues: FHVPDDRPCINPGRCPLVPDATCTFVCKAADNDFGYECQHVWTFEGQRVGCYA.

Cystine bridges form between Cys9–Cys23, Cys15–Cys51, and Cys27–Cys38. Position 53 (Ala53) interacts with Zn(2+).

As to quaternary structure, monomer. Interacts (via C-terminus) with human CPA4.

In terms of biological role, metallocarboxypeptidase inhibitor. Has an inhibitory effect on bovine CPA1 and CPB2, human CPA1, CPA2, CPA4, CPB1 and CPB2, and porcine CPB1. Does not inhibit D.melanogaster svr (carboxypeptidase D). Shows no activity against serine proteases subtilisin or bovine trypsin, cysteine protease papain, and aspartyl protease porcine pepsin. The sequence is that of Metallocarboxypeptidase inhibitor from Nerita versicolor (Four-tooth nerite).